Reading from the N-terminus, the 704-residue chain is Elongation factor G (704 aa).

Positions aspartate 8–valine 291 constitute a tr-type G domain. Residues alanine 17–threonine 24, aspartate 90–histidine 94, and asparagine 144–aspartate 147 each bind GTP.

Belongs to the TRAFAC class translation factor GTPase superfamily. Classic translation factor GTPase family. EF-G/EF-2 subfamily.

Its subcellular location is the cytoplasm. In terms of biological role, catalyzes the GTP-dependent ribosomal translocation step during translation elongation. During this step, the ribosome changes from the pre-translocational (PRE) to the post-translocational (POST) state as the newly formed A-site-bound peptidyl-tRNA and P-site-bound deacylated tRNA move to the P and E sites, respectively. Catalyzes the coordinated movement of the two tRNA molecules, the mRNA and conformational changes in the ribosome. The sequence is that of Elongation factor G from Pelodictyon phaeoclathratiforme (strain DSM 5477 / BU-1).